The chain runs to 1020 residues: X-linked retinitis pigmentosa GTPase regulator (1020 aa).

RCC1 repeat units lie at residues 54-105 (NKLY…STEG), 106-158 (GNVY…LTED), 159-208 (GRLF…VTTD), 209-261 (GELY…LTEN), 262-313 (AVYT…ITDI), and 314-367 (GLMY…FAAP). 2 positions are modified to phosphoserine: S418 and S518. 3 disordered regions span residues 609-776 (HENN…IISK), 790-906 (EIPE…KEKA), and 989-1020 (DNKD…CTIL). 8 stretches are compositionally biased toward basic and acidic residues: residues 618–636 (LDAK…QKES), 644–665 (EKET…EKST), 685–698 (EENK…ESCK), 704–715 (DSERESVEKPDS), 760–771 (KLIEQGNEKETK), 790–802 (EIPE…EDSK), 816–853 (ENVK…LKLE), and 883–906 (SKTE…KEKA). Positions 996 to 1009 (NHMSQNHQNIPPTN) are enriched in polar residues. C1017 bears the Cysteine methyl ester mark. A lipid anchor (S-geranylgeranyl cysteine) is attached at C1017. A propeptide spans 1018–1020 (TIL) (removed in mature form).

In terms of assembly, interacts with SPATA7. Interacts with CEP290. Interacts with WHRN. Interacts with PDE6D. Interacts with RPGRIP1. Interacts with RPGRIP1L. PDE6D, RPGRIP1 and RPGRIP1L may compete for the same binding sites. Interacts with RAB37 and RAB8A (in GDP-bound forms); functions as GEF for RAB37 and RAB8A. Isoform 6 interacts with NPM1 (via C-terminus). Isoform 6 interacts with SMC1A and SMC3. Post-translationally, prenylated. In terms of tissue distribution, heart, brain, placenta, lung, liver, muscle, kidney, retina, pancreas and fetal retinal pigment epithelium. Isoform 3 is found only in the retina. Colocalizes with RPGRIP1 in the outer segment of rod photoreceptors and cone outer segments.

The protein localises to the cytoplasm. Its subcellular location is the cytoskeleton. It is found in the flagellum axoneme. It localises to the golgi apparatus. The protein resides in the cell projection. The protein localises to the cilium. Its subcellular location is the microtubule organizing center. It is found in the centrosome. It localises to the cilium basal body. The protein resides in the cilium axoneme. In terms of biological role, acts as a guanine-nucleotide releasing factor (GEF) for RAB8A and RAB37 by promoting the conversion of inactive RAB-GDP to the active form RAB-GTP. GEF activity towards RAB8A may facilitate ciliary trafficking by modulating ciliary intracellular localization of RAB8A. GEF activity towards RAB37 maintains autophagic homeostasis and retinal function. Involved in photoreceptor integrity. May control cilia formation by regulating actin stress filaments and cell contractility. May be involved in microtubule organization and regulation of transport in primary cilia. May play a critical role in spermatogenesis and in intraflagellar transport processes. This Homo sapiens (Human) protein is X-linked retinitis pigmentosa GTPase regulator.